A 255-amino-acid chain; its full sequence is Putative expansin-A27 (255 aa).

The signal sequence occupies residues 1–24; it reads MGAMAENLLVLCTILAARMALAAA. The region spanning 45–160 is the Expansin-like EG45 domain; it reads GGACGYGNLY…RRVRCWRRGG (116 aa). The Expansin-like CBD domain occupies 170–249; it reads HFELVLVANV…GWKFGQTFST (80 aa).

The protein belongs to the expansin family. Expansin A subfamily.

Its subcellular location is the secreted. The protein localises to the cell wall. It is found in the membrane. May cause loosening and extension of plant cell walls by disrupting non-covalent bonding between cellulose microfibrils and matrix glucans. No enzymatic activity has been found. May be required for rapid internodal elongation in deepwater rice during submergence. This chain is Putative expansin-A27 (EXPA27), found in Oryza sativa subsp. japonica (Rice).